We begin with the raw amino-acid sequence, 591 residues long: MTPTAPSPLVWRDDGLPQSSLYGDVYFSSVDGLAETRAVFLAGCGLPERFAERRDFVVGELGFGSGLNIAALLDLWRREKPPGGRLHIFSIEAHPLSRDEAARILAHWPELGEAAQVLLDHWPGRARGFHRVDLPGFDAVLDLAVMDVVEALEAWDGLADAWFLDGFSPALNPAMWRDEVLAAVGARSAPGARAATFTVAGAVRRGLSAAGFEIAKRPGFGRKRERLEAWRPGVRPVAQRPETLAIIGGGIAGAALARAARAAGLEVTVIDDADAVAASGNPAALVTPALDAGGGPRAALYAQALSRAVTLYEAQPDAVLAREVLQLAAGERDPARFATVADQDLFEPGDMRTLEAEDTRARLETPTPALAMAGARVIAPAEVTAAWAGPVVRRRVAKAERDGEGWRLLDAAGEIIARADRLALAGGAAGADLLAEAPLRPVRGQASWTRGHGAPATAFGGYAIPTREGLLFGATHDRDDTQTNVRSEDHARNLATLAKGLPALAARLAGSTFEGRAAIRATTPDRLPLADLREDGVIVLTGLGSRGFCLAPLLAEHLVARLLDVPSPLPRQLSHLLKLTRFDSPVTRSRL.

Residues 1-232 (MTPTAPSPLV…KRERLEAWRP (232 aa)) form a tRNA (mnm(5)s(2)U34)-methyltransferase region. The segment at 247-591 (IGGGIAGAAL…FDSPVTRSRL (345 aa)) is FAD-dependent cmnm(5)s(2)U34 oxidoreductase.

This sequence in the N-terminal section; belongs to the methyltransferase superfamily. tRNA (mnm(5)s(2)U34)-methyltransferase family. The protein in the C-terminal section; belongs to the DAO family. Requires FAD as cofactor.

It localises to the cytoplasm. It catalyses the reaction 5-aminomethyl-2-thiouridine(34) in tRNA + S-adenosyl-L-methionine = 5-methylaminomethyl-2-thiouridine(34) in tRNA + S-adenosyl-L-homocysteine + H(+). Its function is as follows. Catalyzes the last two steps in the biosynthesis of 5-methylaminomethyl-2-thiouridine (mnm(5)s(2)U) at the wobble position (U34) in tRNA. Catalyzes the FAD-dependent demodification of cmnm(5)s(2)U34 to nm(5)s(2)U34, followed by the transfer of a methyl group from S-adenosyl-L-methionine to nm(5)s(2)U34, to form mnm(5)s(2)U34. The protein is tRNA 5-methylaminomethyl-2-thiouridine biosynthesis bifunctional protein MnmC of Caulobacter vibrioides (strain ATCC 19089 / CIP 103742 / CB 15) (Caulobacter crescentus).